The primary structure comprises 230 residues: Homeobox protein Hox-B5 (230 aa).

Residues 1–135 are disordered; the sequence is GGGGGNVSGS…GAAGTDGQSP (135 aa). Residues 49–65 are compositionally biased toward polar residues; sequence FPGQESSRFRANQNCPL. A compositionally biased stretch (low complexity) spans 87–103; the sequence is ATSSAHFTETEETSASS. An Antp-type hexapeptide motif is present at residues 137 to 142; it reads IFPWMR. Positions 155–214 form a DNA-binding region, homeobox; sequence GKRARTAYTRYQTLELEKEFHFNRYLTRRRRIEIAHTLCLSERQIKIWFQNRRMKWKKDN.

It belongs to the Antp homeobox family.

It is found in the nucleus. Functionally, sequence-specific transcription factor which is part of a developmental regulatory system that provides cells with specific positional identities on the anterior-posterior axis. The sequence is that of Homeobox protein Hox-B5 (hoxb5) from Xenopus laevis (African clawed frog).